The chain runs to 361 residues: Beta-hexosaminidase (361 aa).

Residues aspartate 69, arginine 77, arginine 144, and 174–175 (KH) each bind substrate. Histidine 187 (proton donor/acceptor) is an active-site residue. The active-site Nucleophile is the aspartate 258.

It belongs to the glycosyl hydrolase 3 family. NagZ subfamily.

The protein localises to the cytoplasm. The enzyme catalyses Hydrolysis of terminal non-reducing N-acetyl-D-hexosamine residues in N-acetyl-beta-D-hexosaminides.. It functions in the pathway cell wall biogenesis; peptidoglycan recycling. Its function is as follows. Plays a role in peptidoglycan recycling by cleaving the terminal beta-1,4-linked N-acetylglucosamine (GlcNAc) from peptide-linked peptidoglycan fragments, giving rise to free GlcNAc, anhydro-N-acetylmuramic acid and anhydro-N-acetylmuramic acid-linked peptides. This chain is Beta-hexosaminidase, found in Neisseria gonorrhoeae (strain ATCC 700825 / FA 1090).